The primary structure comprises 343 residues: Probable dual-specificity RNA methyltransferase RlmN (343 aa).

Residue Glu-91 is the Proton acceptor of the active site. Residues His-97–Asp-326 enclose the Radical SAM core domain. Cys-104 and Cys-331 form a disulfide bridge. Residues Cys-111, Cys-115, and Cys-118 each coordinate [4Fe-4S] cluster. Residues Gly-158–Glu-159, Ser-190, Ser-213–His-215, and Asn-289 each bind S-adenosyl-L-methionine. Cys-331 acts as the S-methylcysteine intermediate in catalysis.

Belongs to the radical SAM superfamily. RlmN family. Requires [4Fe-4S] cluster as cofactor.

It localises to the cytoplasm. The catalysed reaction is adenosine(2503) in 23S rRNA + 2 reduced [2Fe-2S]-[ferredoxin] + 2 S-adenosyl-L-methionine = 2-methyladenosine(2503) in 23S rRNA + 5'-deoxyadenosine + L-methionine + 2 oxidized [2Fe-2S]-[ferredoxin] + S-adenosyl-L-homocysteine. The enzyme catalyses adenosine(37) in tRNA + 2 reduced [2Fe-2S]-[ferredoxin] + 2 S-adenosyl-L-methionine = 2-methyladenosine(37) in tRNA + 5'-deoxyadenosine + L-methionine + 2 oxidized [2Fe-2S]-[ferredoxin] + S-adenosyl-L-homocysteine. Its function is as follows. Specifically methylates position 2 of adenine 2503 in 23S rRNA and position 2 of adenine 37 in tRNAs. The polypeptide is Probable dual-specificity RNA methyltransferase RlmN (Thermotoga maritima (strain ATCC 43589 / DSM 3109 / JCM 10099 / NBRC 100826 / MSB8)).